Consider the following 228-residue polypeptide: MPRYYCDYCDTYLTHDSPSVRKQHNAGYKHKANVRTYYQQFEEQQTQSLIDQRIKEHLGQAAAFQAGAPFNQHMLAFPGAVARPRLPILPTPGMPHGFPQAPLMPGVRPPILPAPGVPGYPGAPPTMPQPGAPPGSMPQPGAPPGSMPQPGAPPGSMPMQMAPLPRPPTLPPPTSGVPGAPIPNSAAPPAIYQANPPAPAGPTSGAPPAPPTAPQPAFSYALPSEGNH.

The Matrin-type zinc finger occupies 4–36; that stretch reads YYCDYCDTYLTHDSPSVRKQHNAGYKHKANVRT. Positions 105–228 are disordered; the sequence is PGVRPPILPA…SYALPSEGNH (124 aa). Pro residues-rich tracts occupy residues 107–156 and 164–175; these read VRPP…PPGS and LPRPPTLPPPTS. The segment covering 178–190 has biased composition (low complexity); that stretch reads PGAPIPNSAAPPA. A compositionally biased stretch (pro residues) spans 196–214; it reads PPAPAGPTSGAPPAPPTAP.

It belongs to the U1 small nuclear ribonucleoprotein C family. In terms of assembly, U1 snRNP is composed of the 7 core Sm proteins B/B', D1, D2, D3, E, F and G that assemble in a heptameric protein ring on the Sm site of the small nuclear RNA to form the core snRNP, and at least 3 U1 snRNP-specific proteins U1-70K, U1-A and U1-C. U1-C interacts with U1 snRNA and the 5' splice-site region of the pre-mRNA.

The protein resides in the nucleus. Functionally, component of the spliceosomal U1 snRNP, which is essential for recognition of the pre-mRNA 5' splice-site and the subsequent assembly of the spliceosome. U1-C is directly involved in initial 5' splice-site recognition for both constitutive and regulated alternative splicing. The interaction with the 5' splice-site seems to precede base-pairing between the pre-mRNA and the U1 snRNA. Stimulates commitment or early (E) complex formation by stabilizing the base pairing of the 5' end of the U1 snRNA and the 5' splice-site region. This is U1 small nuclear ribonucleoprotein C-2 from Sorghum bicolor (Sorghum).